A 518-amino-acid polypeptide reads, in one-letter code: Subtilisin-like serine protease Cla h 9.0101 (518 aa).

A signal peptide spans 1–16 (MRGALAGLSLATLATA). Residues 17–138 (SPVLVNSIHN…ERDQEVHVLG (122 aa)) constitute a propeptide, removed in mature form. An Inhibitor I9 domain is found at 44 to 136 (YMIKFKDHVT…LVERDQEVHV (93 aa)). Residues 148 to 454 (PWGLARISHR…GGESNYSAIV (307 aa)) enclose the Peptidase S8 domain. Active-site charge relay system residues include Asp-184 and His-216. Residues 244-298 (RSNGSGSMSDVVKGVEYAAESHLEQVSITKKGKRKGFKGSTANMSLGGGKSPILD) are igE-binding. Asn-246 and Asn-286 each carry an N-linked (GlcNAc...) asparagine glycan. Ser-382 acts as the Charge relay system in catalysis. Asn-449 carries N-linked (GlcNAc...) asparagine glycosylation. The propeptide at 460-518 (KATHRPTMLEEIESEAKVASKKVYSEGDELAHKVAELTEKVEDLIAGELKDMFRELKRE) is removed in mature form.

This sequence belongs to the peptidase S8 family.

Functionally, serine protease. The protein is Subtilisin-like serine protease Cla h 9.0101 of Davidiella tassiana (Mycosphaerella tassiana).